Consider the following 822-residue polypeptide: Pentatricopeptide repeat-containing protein At2g18940, chloroplastic (822 aa).

Positions 1–42 are disordered; it reads MDGALFPHKPPYPIQSKRPPPSQSSNQSIKFSSATLHLPPPS. The N-terminal 77 residues, 1–77, are a transit peptide targeting the chloroplast; that stretch reads MDGALFPHKP…SAAARFPSLE (77 aa). Residues 8–22 are compositionally biased toward pro residues; the sequence is HKPPYPIQSKRPPPS. Positions 23-37 are enriched in low complexity; the sequence is QSSNQSIKFSSATLH. 17 PPR repeats span residues 209–243, 244–279, 280–314, 315–349, 350–384, 385–419, 420–454, 455–489, 490–524, 525–559, 560–594, 595–629, 630–664, 665–699, 700–734, 735–769, and 770–800; these read DVRAYTTILHAYSRTGKYEKAIDLFERMKEMGPSP, TLVTYNVILDVFGKMGRSWRKILGVLDEMRSKGLKF, DEFTCSTVLSACAREGLLREAKEFFAELKSCGYEP, GTVTYNALLQVFGKAGVYTEALSVLKEMEENSCPA, DSVTYNELVAAYVRAGFSKEAAGVIEMMTKKGVMP, NAITYTTVIDAYGKAGKEDEALKLFYSMKEAGCVP, NTCTYNAVLSLLGKKSRSNEMIKMLCDMKSNGCSP, NRATWNTMLALCGNKGMDKFVNRVFREMKSCGFEP, DRDTFNTLISAYGRCGSEVDASKMYGEMTRAGFNA, CVTTYNALLNALARKGDWRSGENVISDMKSKGFKP, TETSYSLMLQCYAKGGNYLGIERIENRIKEGQIFP, SWMLLRTLLLANFKCRALAGSERAFTLFKKHGYKP, DMVIFNSMLSIFTRNNMYDQAEGILESIREDGLSP, DLVTYNSLMDMYVRRGECWKAEEILKTLEKSQLKP, DLVSYNTVIKGFCRRGLMQEAVRMLSEMTERGIRP, CIFTYNTFVSGYTAMGMFAEIEDVIECMAKNDCRP, and NELTFKMVVDGYCRAGKYSEAMDFVSKIKTF.

The protein belongs to the PPR family. P subfamily.

The protein resides in the plastid. The protein localises to the chloroplast. The protein is Pentatricopeptide repeat-containing protein At2g18940, chloroplastic of Arabidopsis thaliana (Mouse-ear cress).